We begin with the raw amino-acid sequence, 99 residues long: Aspartyl/glutamyl-tRNA(Asn/Gln) amidotransferase subunit C (99 aa).

Belongs to the GatC family. As to quaternary structure, heterotrimer of A, B and C subunits.

The catalysed reaction is L-glutamyl-tRNA(Gln) + L-glutamine + ATP + H2O = L-glutaminyl-tRNA(Gln) + L-glutamate + ADP + phosphate + H(+). It carries out the reaction L-aspartyl-tRNA(Asn) + L-glutamine + ATP + H2O = L-asparaginyl-tRNA(Asn) + L-glutamate + ADP + phosphate + 2 H(+). In terms of biological role, allows the formation of correctly charged Asn-tRNA(Asn) or Gln-tRNA(Gln) through the transamidation of misacylated Asp-tRNA(Asn) or Glu-tRNA(Gln) in organisms which lack either or both of asparaginyl-tRNA or glutaminyl-tRNA synthetases. The reaction takes place in the presence of glutamine and ATP through an activated phospho-Asp-tRNA(Asn) or phospho-Glu-tRNA(Gln). The sequence is that of Aspartyl/glutamyl-tRNA(Asn/Gln) amidotransferase subunit C from Bifidobacterium longum (strain NCC 2705).